The sequence spans 97 residues: Cobalt transport protein CbiN (97 aa).

Helical transmembrane passes span 6–26 (VLMILGVIILTLAPLIMYSGL) and 68–88 (SLLFALQAAIGAMIIGYFFGY).

It belongs to the CbiN family. In terms of assembly, forms an energy-coupling factor (ECF) transporter complex composed of an ATP-binding protein (A component, CbiO), a transmembrane protein (T component, CbiQ) and 2 possible substrate-capture proteins (S components, CbiM and CbiN) of unknown stoichimetry.

The protein localises to the cell membrane. It functions in the pathway cofactor biosynthesis; adenosylcobalamin biosynthesis. Its function is as follows. Part of the energy-coupling factor (ECF) transporter complex CbiMNOQ involved in cobalt import. This chain is Cobalt transport protein CbiN, found in Methanococcus maripaludis (strain C6 / ATCC BAA-1332).